We begin with the raw amino-acid sequence, 777 residues long: Cyclin-F (777 aa).

The Nuclear localization signal 1 signature appears at 20–28 (KRRIKRRPR). An F-box domain is found at 29–76 (NLTILSLPEDVLFHILKWLSVGDILAVRAVHSHLKYLVDNHASVWASA). Residues 288–405 (QASQAVNKQQ…EIISALEGKI (118 aa)) enclose the Cyclin N-terminal domain. Short sequence motifs (d box) lie at residues 310-313 (RYIL), 343-346 (RRRL), and 349-352 (RYKL). Disordered regions lie at residues 544 to 591 (QESP…TPTA) and 651 to 777 (QESS…HLAS). The Nuclear localization signal 2 signature appears at 568–574 (RRSKRKR). A PEST region spans residues 582 to 761 (RGSFVTTPTA…ESGVHQQPVK (180 aa)). 2 stretches are compositionally biased toward low complexity: residues 695-708 (SGYS…PISS) and 719-731 (STSV…HSST). Positions 751 to 767 (PESGVHQQPVKRQNLSV) are enriched in polar residues. The D box 4 signature appears at 762-765 (RQNL). Residues 768 to 777 (HSDKDMHLAS) show a composition bias toward basic and acidic residues.

Belongs to the cyclin family. Cyclin AB subfamily. Component of the SCF(CCNF) complex consisting of CUL1, RBX1, SKP1 and CCNF. Interacts with SKP1. Interacts with CUL1. Interacts with CCNB1; interaction is required for nuclear localization of CCNB1. Interacts with CCP110; this interaction leads to CCP110 ubiquitination and degradation via the proteasome pathway. Interacts (via the Cyclin N-terminal domain) with MYBL2/BMYB. Interacts with FZR1/CDH1 (via N-terminus). Interacts with RRM2 (via Cy motif and when phosphorylated at 'Thr-33'); the interaction occurs exclusively in G2 and early M. Interacts with CDC6 (via Cy motif); the interaction takes place during G2 and M phase. Post-translationally, degraded when the spindle assembly checkpoint is activated during the G2-M transition. Degradation is not dependent on the proteasome or ubiquitin and depends on the C-terminal PEST sequence. Phosphorylated just before cells enter into mitosis. In terms of processing, ubiquitinated by the anaphase-promoting complex (APC/C); leading to its degradation by the proteasome.

Its subcellular location is the nucleus. The protein localises to the cytoplasm. It is found in the perinuclear region. It localises to the cytoskeleton. The protein resides in the microtubule organizing center. Its subcellular location is the centrosome. The protein localises to the centriole. Substrate recognition component of a SCF (SKP1-CUL1-F-box protein) E3 ubiquitin-protein ligase complex which mediates the ubiquitination and subsequent proteasomal degradation of target proteins. The SCF(CCNF) E3 ubiquitin-protein ligase complex is an integral component of the ubiquitin proteasome system (UPS) and links proteasome degradation to the cell cycle. Mediates the substrate recognition and the proteasomal degradation of various target proteins involved in the regulation of cell cycle progression and in the maintenance of genome stability. Mediates the ubiquitination and subsequent proteasomal degradation of CP110 during G2 phase, thereby acting as an inhibitor of centrosome reduplication. In G2, mediates the ubiquitination and proteasomal degradation of CDC6, thereby suppressing DNA re-replication and preventing genome instability. Involved in the ubiquitination and degradation of the substrate adapter CDH1 of the anaphase-promoting complex (APC/C), thereby acting as an antagonist of APC/C in regulating G1 progression and S phase entry. May play a role in the G2 cell cycle checkpoint control after DNA damage, possibly by promoting the ubiquitination of MYBL2/BMYB. This chain is Cyclin-F (Ccnf), found in Mus musculus (Mouse).